Consider the following 333-residue polypeptide: Protoheme IX farnesyltransferase (333 aa).

Transmembrane regions (helical) follow at residues 64 to 84 (LICT…LNCL), 110 to 130 (TVFL…VSGV), 133 to 153 (LAAG…TVIL), 161 to 181 (IVFG…AATG), 189 to 209 (WLFG…AILL), 246 to 266 (IMGV…LLPF), and 287 to 307 (AKSL…LLLI).

The protein belongs to the UbiA prenyltransferase family. Protoheme IX farnesyltransferase subfamily.

It localises to the cell inner membrane. The catalysed reaction is heme b + (2E,6E)-farnesyl diphosphate + H2O = Fe(II)-heme o + diphosphate. The protein operates within porphyrin-containing compound metabolism; heme O biosynthesis; heme O from protoheme: step 1/1. Its function is as follows. Converts heme B (protoheme IX) to heme O by substitution of the vinyl group on carbon 2 of heme B porphyrin ring with a hydroxyethyl farnesyl side group. The polypeptide is Protoheme IX farnesyltransferase (Prochlorococcus marinus (strain AS9601)).